A 506-amino-acid polypeptide reads, in one-letter code: Maturase K (506 aa).

Belongs to the intron maturase 2 family. MatK subfamily.

It localises to the plastid. The protein resides in the chloroplast. Its function is as follows. Usually encoded in the trnK tRNA gene intron. Probably assists in splicing its own and other chloroplast group II introns. The sequence is that of Maturase K from Gaultheria procumbens (Wintergreen).